The sequence spans 254 residues: N(G),N(G)-dimethylarginine dimethylaminohydrolase (254 aa).

Substrate-binding positions include Leu18, Asp60, Glu65 to Asp66, Arg85, and Arg132. The active-site Proton donor is the His162. Zn(2+) is bound at residue His162. Ile243 contacts substrate. Cys249 serves as a coordination point for Zn(2+). The active-site Nucleophile is Cys249.

The protein belongs to the DDAH family. Homodimer.

It catalyses the reaction N(omega),N(omega)-dimethyl-L-arginine + H2O = dimethylamine + L-citrulline. The catalysed reaction is N(omega)-methyl-L-arginine + H2O = L-citrulline + methylamine. Inhibited by zinc ions. Competitively inhibited by lysine. Hydrolyzes N(G),N(G)-dimethyl-L-arginine (ADMA) and N(G)-monomethyl-L-arginine (MMA). This chain is N(G),N(G)-dimethylarginine dimethylaminohydrolase, found in Pseudomonas aeruginosa (strain ATCC 15692 / DSM 22644 / CIP 104116 / JCM 14847 / LMG 12228 / 1C / PRS 101 / PAO1).